Reading from the N-terminus, the 571-residue chain is uncharacterized protein (571 aa).

5 helical membrane-spanning segments follow: residues 10 to 29 (VRLH…HFIG), 36 to 55 (VSLG…GLLF), 65 to 87 (WAFF…FASL), 96 to 118 (ALAV…LFRF), and 166 to 188 (ATTY…PRLL). An RCK C-terminal domain is found at 294–378 (TEVDDQELLS…IATAARNLGF (85 aa)). Helical transmembrane passes span 388-406 (LVYL…LLQV), 411-433 (VPLG…WLYS), 446-465 (LRLL…GLAA), 480-502 (LFAK…GLLL), 509-531 (LPPI…LNAL), and 546-568 (VPFA…CAVA).

This sequence belongs to the AAE transporter (TC 2.A.81) family.

Its subcellular location is the cell membrane. This is an uncharacterized protein from Bordetella bronchiseptica (strain ATCC BAA-588 / NCTC 13252 / RB50) (Alcaligenes bronchisepticus).